Here is a 650-residue protein sequence, read N- to C-terminus: Glycoprotein antigen BM86 (650 aa).

The signal sequence occupies residues 1–19; that stretch reads MRGIALFVAAVSLIVEGTA. 2 EGF-like domains span residues 20–66 and 67–104; these read ESSI…KQCE and YKDT…LQCK. 6 cysteine pairs are disulfide-bonded: Cys-24–Cys-37, Cys-32–Cys-49, Cys-51–Cys-65, Cys-71–Cys-81, Cys-76–Cys-91, and Cys-93–Cys-103. Residues Asn-141 and Asn-182 are each glycosylated (N-linked (GlcNAc...) asparagine). EGF-like domains follow at residues 205 to 247, 251 to 292, and 291 to 335; these read CINA…ITCK, HTVS…DTCI, and CISD…NECL. 9 disulfides stabilise this stretch: Cys-209-Cys-222, Cys-218-Cys-231, Cys-233-Cys-246, Cys-255-Cys-269, Cys-263-Cys-278, Cys-280-Cys-291, Cys-295-Cys-307, Cys-300-Cys-316, and Cys-318-Cys-334. N-linked (GlcNAc...) asparagine glycosylation is found at Asn-348 and Asn-382. EGF-like domains follow at residues 482-530 and 531-568; these read RRSV…IGCI and ERTT…HECY. 6 cysteine pairs are disulfide-bonded: Cys-486/Cys-500, Cys-492/Cys-516, Cys-518/Cys-529, Cys-535/Cys-550, Cys-543/Cys-559, and Cys-561/Cys-567. A disordered region spans residues 603–628; sequence KSEATTAATTTTKAKDKDPDPGKSSA. A lipid anchor (GPI-anchor amidated serine) is attached at Ser-627. Residues 628–650 constitute a propeptide, removed in mature form; it reads AAAVSATGLLLLLAATSVTAASL.

The protein resides in the cell membrane. In Rhipicephalus microplus (Cattle tick), this protein is Glycoprotein antigen BM86.